Reading from the N-terminus, the 205-residue chain is MSIMSYNGGAVMAMKGKNCVAIAADRRFGIQAQMVTTDFQKIFPMGDRLYIGLAGLATDVQTVAQRLKFRLNLYELKEGRQIKPYTLMSMVANLLYEKRFGPYYTEPVIAGLDPKTFKPFICSLDLIGCPMVTDDFVVSGTCAEQMYGMCESLWEPNMDPDHLFETISQAMLNAVDRDAVSGMGVIVHIIEKDKITTRTLKARMD.

Ser-2 is modified (N-acetylserine). N6-acetyllysine is present on Lys-77.

The protein belongs to the peptidase T1B family. The 26S proteasome consists of a 20S proteasome core and two 19S regulatory subunits. The 20S proteasome core is a barrel-shaped complex made of 28 subunits that are arranged in four stacked rings. The two outer rings are each formed by seven alpha subunits, and the two inner rings are formed by seven beta subunits. The proteolytic activity is exerted by three beta-subunits PSMB5, PSMB6 and PSMB7. In terms of assembly, (Microbial infection) Interacts with HIV-1 TAT protein.

Its subcellular location is the cytoplasm. The protein localises to the nucleus. Non-catalytic component of the 20S core proteasome complex involved in the proteolytic degradation of most intracellular proteins. This complex plays numerous essential roles within the cell by associating with different regulatory particles. Associated with two 19S regulatory particles, forms the 26S proteasome and thus participates in the ATP-dependent degradation of ubiquitinated proteins. The 26S proteasome plays a key role in the maintenance of protein homeostasis by removing misfolded or damaged proteins that could impair cellular functions, and by removing proteins whose functions are no longer required. Associated with the PA200 or PA28, the 20S proteasome mediates ubiquitin-independent protein degradation. This type of proteolysis is required in several pathways including spermatogenesis (20S-PA200 complex) or generation of a subset of MHC class I-presented antigenic peptides (20S-PA28 complex). This Homo sapiens (Human) protein is Proteasome subunit beta type-3.